Reading from the N-terminus, the 276-residue chain is Large ribosomal subunit protein uL2 (276 aa).

2 disordered regions span residues L34–G55 and R221–K276. Residues L37 to R48 are compositionally biased toward polar residues.

It belongs to the universal ribosomal protein uL2 family. In terms of assembly, part of the 50S ribosomal subunit. Forms a bridge to the 30S subunit in the 70S ribosome.

Its function is as follows. One of the primary rRNA binding proteins. Required for association of the 30S and 50S subunits to form the 70S ribosome, for tRNA binding and peptide bond formation. It has been suggested to have peptidyltransferase activity; this is somewhat controversial. Makes several contacts with the 16S rRNA in the 70S ribosome. In Enterococcus faecalis (strain ATCC 700802 / V583), this protein is Large ribosomal subunit protein uL2.